The sequence spans 378 residues: MSIPLPHAEFQWDHYDSKVNPVNGHVECTYRTLTCSWSAPRFVESPFLQVHGLAPGLNYGQQAFEGLLAHRTARNRILIFRPASHSSRFRHSASVVSMPPVPESLFLACVHMAVARNAEFVPPHNFAGNMYIRPLEFGSSAQIGLDVPDEFTFCVFVQPHVPLHGHTPLRALVAEEFDRAATRGTGNCKVGGNYGPVLKWSKDAKKPENGGWSALLHVDSKTQSYVDEFSAAALIGVKSPDQESTQVPILTVAHSEAAIHSITAESVVTIAQSFGWTVERRLVKLEELSSFSEVFAVGTAATIRPCSLIYHRSTGKHFTFTSDGPYYQRLWKTLSGIQKGEIEDIFQWCQDLRFEEFGERGHNGQPTADPTRVIEMPE.

R88 lines the pyridoxal 5'-phosphate pocket. K189 is modified (N6-(pyridoxal phosphate)lysine). A pyridoxal 5'-phosphate-binding site is contributed by E228. The interval 359-378 is disordered; it reads ERGHNGQPTADPTRVIEMPE.

Belongs to the class-IV pyridoxal-phosphate-dependent aminotransferase family. It depends on pyridoxal 5'-phosphate as a cofactor.

Its pathway is secondary metabolite biosynthesis. Functionally, aminotransferase; part of the gene cluster that mediates the biosynthesis of the cyclic tetrapeptide apicidin F (APF). The non-ribosomal peptide synthetase apf1 incorporates four different amino acids to produce apicidin F: L-phenylalanine, D-pipecolic acid (D-pip), N-methoxy-L-tryptophan and L-2-aminooctanedioic acid. L-Phenylalanine is the only proteinogenic amino acid directly used by apf1. The 3 other apf1 substrates are non-proteinogenic and have to be modified by other enzymes of the cluster. Lysine is converted to delta-1-pyrroline-5-carboxylate (P5C) which is reduced to L-pipecolic acid (L-pip) by apf3. L-pip is epimerized to D-pip, probably by apf1 activity, prior to incorporation. L-Tryptophan is N-oxidyzed by one of the cytochrome P450 monooxygenases (apf7 or apf8), and further methylated at the hydroxy group by the O-methyltransferase apf6 to yield N-methoxy-L-tryptophan. The synthesis of the fourth apf1 substrate is more complex. The fatty acid synthase apf5 is involved in the synthesis of the octanoic acid backbone of L-2-aminooctanedioic acid by fixing one acetyl-CoA unit and three malonyl-CoA units. Then one of the cytochrome P450 monooxygenases (apf7 or apf8) may oxidize this backbone to 2-oxooctanoic acid. The aminotransferase apf4 is predicted to catalyze the exchange of the keto group with an amino group. The next step would be the oxidation of 2-aminooctanoic acid by one of the cytochrome P450 monooxygenases (apf7 or apf8). The last step is the oxidation of 2-amino-8-hydroxyoctanoic acid to 2-aminooctanedioic acid is catalyzed by the FAD-dependent monooxygenase apf9. This Gibberella fujikuroi (strain CBS 195.34 / IMI 58289 / NRRL A-6831) (Bakanae and foot rot disease fungus) protein is Aminotransferase apf4.